The chain runs to 1427 residues: MAFRKENKIKSNFSKISIGLASPEEILENSSGEVLKPETINYRTYKPERDGLFCERIFGPIKDYECHCGKYKRIRYKGIVCDRCGVEVTEKKVRRERMGHIQLVVPVAHIWYFRSLPNKIGYLLGLPTKKLDSIIYYERYVVIQPGVKAEDGIAEFDLLSEEEYLDILDTLPKDNQYLEDTDPNKFIAKMGAEAIYDLLARLDLDALSYELRHRAGNDASQQRKNEALKRLQVVESFRASRGRNKPEWMIVRIVPVIPPELRPLVPLDGGRFATSDLNDLYRRVIIRNNRLKRLIEIKAPEVILRNEKRMLQESVDSLFDNSRKSSAVKTDANRPLKSLSDSLKGKQGRFRQNLLGKRVDYSARSVIVVGPELRMHECGIPKLMAAELYKPFIIRKLIERGIVKTVKSAKKIVDRKEPVIWDILEHVMKGHPVLLNRAPTLHRLGIQAFQPKMIEGKAIQLHPLACTAFNADFDGDQMAVHLPLSNEAVLEAQMLMLASHNILNPANGAPITVPSQDMVLGLYYITKLRKGAKGEGLTFYGPEEALIAYNEGKVDIHAPVKVIVKDLDENGNIVDVMRETSVGRVIVNEIVPPEVGYINTIISKKSLRDIISAVIKACGVARTADFLDGIKNLGYKMAFQGGLSFNLGDIIIPKEKETLVQRGYEEVEQVINNYNMGFITNNERYNQVIDIWTHVNSELSNILMKTISSDDQGFNSVYMMLDSGARGSKEQIRQLSGMRGLMAKPQKAGAEGGQIIENPILSNFKEGLSVLEYFISTHGARKGLADTALKTADAGYLTRRLVDVSHDVIINEEDCGTLRGLVCTDLKNNDEVIATLYERILGRVSVHDIIHPQTGELLVAGGEEITEDIAKKIQESPIESVEIRSVLTCESKKGVCAKCYGRNLATNHMVQKGEAVGVIAAQSIGEPGTQLTLRTFHAGGTAANIAANASIVAKNNARLEFEELRTVDIVDETGEAAKVVVGRLAEVRFIDVNTGIVLSTHNVPYGSTLYVADGEVVEKGKLIAKWDPFNAVIITEATGKIEFEGVIENVTYKIESDEATGLREIIIIESKDKTKVPSAHILTEDGDLIRTYNLPVGGHVVIENGQKVKAGEVIVKIPRAVGKAGDITGGLPRVTELFEARNPSNPAVVSEIDGEVTMGKVKRGNREIIVTSKTGEVKKYLVPLSKQILVQENDYVRAGTPLSDGATTPADILAIKGPTAVQEYIVNEVQDVYRLQGVKINDKHFEIIVRQMMRKVTIDEPGDTRFLEQQVVDKLEFMEENDRIWGKKVVVDAGDSENLKAGQIVTARKLRDENSMLKRRDLKPVEVRDAVAATSTQILQGITRAALQTSSFMSAASFQETTKVLNEAAINGKIDKLEGMKENVICGHLIPAGTGLREFDKIIVGSKEEYDRILANKKTVLDYNEVE.

Zn(2+) contacts are provided by Cys66, Cys68, Cys81, and Cys84. Residues Asp472, Asp474, and Asp476 each coordinate Mg(2+). Positions 815, 889, 896, and 899 each coordinate Zn(2+).

It belongs to the RNA polymerase beta' chain family. In terms of assembly, the RNAP catalytic core consists of 2 alpha, 1 beta, 1 beta' and 1 omega subunit. When a sigma factor is associated with the core the holoenzyme is formed, which can initiate transcription. Mg(2+) serves as cofactor. It depends on Zn(2+) as a cofactor.

The catalysed reaction is RNA(n) + a ribonucleoside 5'-triphosphate = RNA(n+1) + diphosphate. DNA-dependent RNA polymerase catalyzes the transcription of DNA into RNA using the four ribonucleoside triphosphates as substrates. This chain is DNA-directed RNA polymerase subunit beta', found in Bacteroides fragilis (strain ATCC 25285 / DSM 2151 / CCUG 4856 / JCM 11019 / LMG 10263 / NCTC 9343 / Onslow / VPI 2553 / EN-2).